Consider the following 288-residue polypeptide: Phenazine biosynthesis-like domain-containing protein 1 (288 aa).

Glu46 is a catalytic residue.

Belongs to the PhzF family.

The sequence is that of Phenazine biosynthesis-like domain-containing protein 1 (Pbld1) from Mus musculus (Mouse).